The chain runs to 247 residues: TM2 domain-containing protein 3 (247 aa).

The first 29 residues, 1–29, serve as a signal peptide directing secretion; it reads MAGGVLPLRGLRALCRVLLFLSQFCILSG. The Extracellular segment spans residues 30–179; sequence GEQSQALAQS…RTFPKMLYCN (150 aa). Residues N87, N122, N140, N157, N169, and N179 are each glycosylated (N-linked (GlcNAc...) asparagine). A helical membrane pass occupies residues 180 to 200; the sequence is WTGGYKWSTALALSITLGGFG. The 48-residue stretch at 183 to 230 folds into the TM2 domain; the sequence is GYKWSTALALSITLGGFGADRFYLGQWREGLGKLFSFGGLGIWTLIDV. At 201 to 215 the chain is on the cytoplasmic side; it reads ADRFYLGQWREGLGK. The chain crosses the membrane as a helical span at residues 216 to 236; the sequence is LFSFGGLGIWTLIDVLLIGVG. Residues 237–247 lie on the Extracellular side of the membrane; that stretch reads YVGPADGSLYI.

Belongs to the TM2 family. In terms of tissue distribution, widely expressed.

Its subcellular location is the membrane. In terms of biological role, probable positive regulator of Notch signaling. This chain is TM2 domain-containing protein 3 (TM2D3), found in Homo sapiens (Human).